A 422-amino-acid chain; its full sequence is Metallocarboxypeptidase A (422 aa).

Positions 1 to 17 (MRSVLSLALLAANVVTA) are cleaved as a signal peptide. Positions 18 to 112 (AVVSPFDYSG…FEAYSAGYAP (95 aa)) are cleaved as a propeptide — activation peptide. Positions 119–419 (SYHSYQDHIS…AGTVAMLKAV (301 aa)) constitute a Peptidase M14 domain. The Zn(2+) site is built by His179 and Glu182. Substrate is bound by residues 179–182 (HARE), Arg237, and 254–255 (NR). Cys248 and Cys271 are disulfide-bonded. His309 is a binding site for Zn(2+). Substrate is bound at residue 310–311 (SY). Residue Glu385 is the Proton donor/acceptor of the active site.

Belongs to the peptidase M14 family. Zn(2+) serves as cofactor.

It is found in the secreted. Extracellular metalloprotease that contributes to pathogenicity. This chain is Metallocarboxypeptidase A (MCPA), found in Trichophyton tonsurans (Scalp ringworm fungus).